Consider the following 171-residue polypeptide: Lipoprotein signal peptidase (171 aa).

Helical transmembrane passes span 12–32 (LAWL…KLYF), 42–62 (IVVI…AAFS), 70–90 (WQRW…VVWL), and 96–116 (NETW…GNLY). Residues Asp126 and Asp145 contribute to the active site. Residues 137-157 (YFPAFNVADSAITVGAVMLAL) form a helical membrane-spanning segment.

This sequence belongs to the peptidase A8 family.

Its subcellular location is the cell inner membrane. The enzyme catalyses Release of signal peptides from bacterial membrane prolipoproteins. Hydrolyzes -Xaa-Yaa-Zaa-|-(S,diacylglyceryl)Cys-, in which Xaa is hydrophobic (preferably Leu), and Yaa (Ala or Ser) and Zaa (Gly or Ala) have small, neutral side chains.. The protein operates within protein modification; lipoprotein biosynthesis (signal peptide cleavage). Its function is as follows. This protein specifically catalyzes the removal of signal peptides from prolipoproteins. The polypeptide is Lipoprotein signal peptidase (Pseudomonas putida (strain ATCC 47054 / DSM 6125 / CFBP 8728 / NCIMB 11950 / KT2440)).